The primary structure comprises 277 residues: MSAAMGRPFLKMNGLGNDFVVVETRSAPFEPTAAQVRAIADRATGIGCDQLIAVDPAEGADAHVRFWNADGEEVGACGNGTRCVGWLLMQSSGKDEAVIETRAGRLVATRAGERLVSVDMGPPRLEWNEIPLAEPHDTRALDVVLYHHADLMAPPGCVSMGNPHVVFFVPDAEQAPAAEAGPAIEGHPLFPEHVNVGFAQVKAPDRIRLRVWERGAGLTKACGTGACAAMVAASRRGLIGRHATMELDGGELFVEWRADGHVIMTGPAAVDFQGELP.

Substrate is bound by residues Asn17, Gln50, and Asn68. The active-site Proton donor is the Cys77. Residues Gly78–Asn79, Asn162, Asn195, and Glu213–Arg214 contribute to the substrate site. The Proton acceptor role is filled by Cys222. Gly223–Thr224 provides a ligand contact to substrate.

The protein belongs to the diaminopimelate epimerase family. As to quaternary structure, homodimer.

The protein resides in the cytoplasm. It catalyses the reaction (2S,6S)-2,6-diaminopimelate = meso-2,6-diaminopimelate. It functions in the pathway amino-acid biosynthesis; L-lysine biosynthesis via DAP pathway; DL-2,6-diaminopimelate from LL-2,6-diaminopimelate: step 1/1. Catalyzes the stereoinversion of LL-2,6-diaminopimelate (L,L-DAP) to meso-diaminopimelate (meso-DAP), a precursor of L-lysine and an essential component of the bacterial peptidoglycan. This Phenylobacterium zucineum (strain HLK1) protein is Diaminopimelate epimerase.